Consider the following 390-residue polypeptide: Phosphoglycerate kinase (390 aa).

Substrate-binding positions include 19–21 (DYN), Arg-34, 57–60 (HLGR), Arg-115, and Arg-148. Residues Lys-198, Gly-289, Glu-320, and 347–350 (GGDS) each bind ATP.

This sequence belongs to the phosphoglycerate kinase family. In terms of assembly, monomer.

The protein localises to the cytoplasm. The enzyme catalyses (2R)-3-phosphoglycerate + ATP = (2R)-3-phospho-glyceroyl phosphate + ADP. Its pathway is carbohydrate degradation; glycolysis; pyruvate from D-glyceraldehyde 3-phosphate: step 2/5. This Thermus thermophilus (strain ATCC 27634 / DSM 579 / HB8) protein is Phosphoglycerate kinase (pgk).